A 396-amino-acid polypeptide reads, in one-letter code: Elongation factor Tu (396 aa).

The region spanning 10 to 205 (KPHVNIGTIG…AVDESIPAPV (196 aa)) is the tr-type G domain. The segment at 19 to 26 (GHVDHGKT) is G1. 19-26 (GHVDHGKT) serves as a coordination point for GTP. Threonine 26 serves as a coordination point for Mg(2+). Residues 62-66 (GITIN) form a G2 region. Residues 83–86 (DAPG) form a G3 region. Residues 83–87 (DAPGH) and 138–141 (NKSD) contribute to the GTP site. Residues 138–141 (NKSD) are G4. A G5 region spans residues 175–177 (SAL).

This sequence belongs to the TRAFAC class translation factor GTPase superfamily. Classic translation factor GTPase family. EF-Tu/EF-1A subfamily. As to quaternary structure, monomer.

The protein resides in the cytoplasm. It carries out the reaction GTP + H2O = GDP + phosphate + H(+). GTP hydrolase that promotes the GTP-dependent binding of aminoacyl-tRNA to the A-site of ribosomes during protein biosynthesis. This is Elongation factor Tu from Mycobacterium leprae (strain Br4923).